The primary structure comprises 111 residues: Large ribosomal subunit protein uL22 (111 aa).

This sequence belongs to the universal ribosomal protein uL22 family. Part of the 50S ribosomal subunit.

In terms of biological role, this protein binds specifically to 23S rRNA; its binding is stimulated by other ribosomal proteins, e.g. L4, L17, and L20. It is important during the early stages of 50S assembly. It makes multiple contacts with different domains of the 23S rRNA in the assembled 50S subunit and ribosome. Its function is as follows. The globular domain of the protein is located near the polypeptide exit tunnel on the outside of the subunit, while an extended beta-hairpin is found that lines the wall of the exit tunnel in the center of the 70S ribosome. The chain is Large ribosomal subunit protein uL22 from Protochlamydia amoebophila (strain UWE25).